Here is a 757-residue protein sequence, read N- to C-terminus: MDVNPTLLFLKVPAQNAISTTFPYTGDPPYSHGTGTGYTMDTVNRTHQYSEKGKWTTNTETGAPQLNPIDGPLPEDNEPSGYAQTDCVLEAMAFLEESHPGIFENSCLETMEVVQQTRVDKLTQGRQTYDWTLNRNQPAATALANTIEVFRSNGLTANESGRLIDFLKDVMDSMDKEEMEITTHFQRKRRVRDNMTKKMVTQRTIGKKKQRLNKKGYLIRALTLNTMTKDAERGKLKRRAIATPGMQIRGFVYFVETLARSICEKLEQSGLPVGGNEKKAKLANVVRKMMTNSQDTELSFTITGDNTKWNENQNPRMFLAMITYITRNQPEWFRNVLSIAPIMFSNKMARLGKGYMFESKSMKLRTQIPAEMLANIDLKYFNESTRKKIEKIRPLLIDGTASLSPGMMMGMFNMLSTVLGVSILNLGQKRYTKTTYWWDGLQSSDDFALIVNAPNHEGIQAGVDRFYRTCKLVGINMSKKKSYINRTGTFEFTSFFYRYGFVANFSMELPSFGVSGINESADMSIGVTVIKNNMINNDLGPATAQMALQLFIKDYRYTYRCHRGDTQIQTRRSFELKKLWDQTRSKAGLLVSDGGPNLYNIRNLHIPEVCLKWELMDEDYQGRLCNPLNPFVSHKEIESINNAVVMPAHGPAKSMEYDAVATTHSWIPKRNRSILNTSQRGILEDEQMYQKCCNLFEKFFPSSSYRRPVGISSMVEAMVSRARIDARIDFESGRIKKEEFSEIMKICCTIEELRRQK.

The segment at 50–82 (SEKGKWTTNTETGAPQLNPIDGPLPEDNEPSGY) is disordered. Residues 55 to 64 (WTTNTETGAP) show a composition bias toward polar residues. 2 consecutive short sequence motifs (nuclear localization signal) follow at residues 187–195 (RKRRVRDNM) and 203–216 (RTIGKKKQRLNKKG). A promoter-binding site region spans residues 249-256 (RGFVYFVE). The RdRp catalytic domain maps to 286 to 483 (VRKMMTNSQD…GINMSKKKSY (198 aa)).

This sequence belongs to the influenza viruses polymerase PB1 family. Influenza RNA polymerase is composed of three subunits: PB1, PB2 and PA. Interacts (via N-terminus) with PA (via C-terminus). Interacts (via C-terminus) with PB2 (via N-terminus); this interaction is essential for transcription initiation. Post-translationally, phosphorylated by host PRKCA.

Its subcellular location is the host nucleus. It localises to the host cytoplasm. The catalysed reaction is RNA(n) + a ribonucleoside 5'-triphosphate = RNA(n+1) + diphosphate. Functionally, RNA-dependent RNA polymerase which is responsible for replication and transcription of virus RNA segments. The transcription of viral mRNAs occurs by a unique mechanism called cap-snatching. 5' methylated caps of cellular mRNAs are cleaved after 10-13 nucleotides by PA. In turn, these short capped RNAs are used as primers by PB1 for transcription of viral mRNAs. During virus replication, PB1 initiates RNA synthesis and copy vRNA into complementary RNA (cRNA) which in turn serves as a template for the production of more vRNAs. The protein is RNA-directed RNA polymerase catalytic subunit of Influenza A virus (strain A/Gull/Minnesota/945/1980 H13N6).